We begin with the raw amino-acid sequence, 209 residues long: Probable chalcone--flavanone isomerase 3 (209 aa).

This sequence belongs to the chalcone isomerase family.

It catalyses the reaction a chalcone = a flavanone.. It participates in secondary metabolite biosynthesis; flavonoid biosynthesis. In terms of biological role, involved in anthocyanin biosynthesis. The sequence is that of Probable chalcone--flavanone isomerase 3 (CHI3) from Arabidopsis thaliana (Mouse-ear cress).